A 352-amino-acid chain; its full sequence is MVRPVRHKKPVNYSQFDHSDSDDDFVSATVPLNKKSRTAPKELKQDKPKPNLNNLRKEEIPVQEKTPKKRLPEGTFSIPASAVPCTKMALDDKLYQRDLEVALALSVKELPTVTTNVQNSQDKSIEKHGSSKIETMNKSPHISNCSVASDYLDLDKITVEDDVGGVQGKRKAASKAAAQQRKILLEGSDGDSANDTEPDFAPGEDSEDDSDFCESEDNDEDFSMRKSKVKEIKKKEVKVKSPVEKKEKKSKSKCNALVTSVDSAPAAVKSESQSLPKKVSLSSDTTRKPLEIRSPSAESKKPKWVPPAASGGSRSSSSPLVVVSVKSPNQSLRLGLSRLARVKPLHPNATST.

Positions 1 to 10 are enriched in basic residues; that stretch reads MVRPVRHKKP. Disordered stretches follow at residues 1–78 and 115–144; these read MVRP…TFSI and TNVQNSQDKSIEKHGSSKIETMNKSPHISN. Phosphoserine is present on residues Ser-19 and Ser-21. Residues 30–49 form an interaction with DNA region; it reads VPLNKKSRTAPKELKQDKPK. A compositionally biased stretch (basic and acidic residues) spans 39-72; that stretch reads APKELKQDKPKPNLNNLRKEEIPVQEKTPKKRLP. A Phosphothreonine modification is found at Thr-66. 2 positions are modified to phosphoserine: Ser-120 and Ser-124. A compositionally biased stretch (polar residues) spans 132-144; that stretch reads KIETMNKSPHISN. An SIM motif motif is present at residues 154-159; that stretch reads LDKITV. The disordered stretch occupies residues 162–323; the sequence is DVGGVQGKRK…RSSSSPLVVV (162 aa). The segment covering 188–221 has biased composition (acidic residues); that stretch reads SDGDSANDTEPDFAPGEDSEDDSDFCESEDNDED. Residues 229-247 are compositionally biased toward basic and acidic residues; the sequence is VKEIKKKEVKVKSPVEKKE. Residues 243–304 are interaction with DNA; that stretch reads VEKKEKKSKS…PSAESKKPKW (62 aa). Lys-251 participates in a covalent cross-link: Glycyl lysine isopeptide (Lys-Gly) (interchain with G-Cter in ubiquitin; alternate). A Glycyl lysine isopeptide (Lys-Gly) (interchain with G-Cter in SUMO) cross-link involves residue Lys-269. The span at 270–284 shows a compositional bias: polar residues; that stretch reads SESQSLPKKVSLSSD. Ser-280 is subject to Phosphoserine. Residues 304–307 carry the WVPP motif motif; the sequence is WVPP. Positions 306–323 are enriched in low complexity; the sequence is PPAASGGSRSSSSPLVVV. Residues 313–352 are interaction with RAD51; that stretch reads SRSSSSPLVVVSVKSPNQSLRLGLSRLARVKPLHPNATST. Ser-327 carries the phosphoserine modification.

In terms of assembly, monomer; elongated monodisperse monomer. Interacts (via C-terminal region) with RAD51; the interaction is direct. Interacts (via SIM motif) with WDR48/UAF1; WDR48/UAF1 and RAD51AP1 cooperate together to stimulate RAD51-mediated homologous recombination (HR). Interacts (via WVPP motif) with DMC1; the interaction is direct. Interacts with PALB2. Interacts with RAD52. Does not interact with DMC1; lack of interaction is caused by the absence of the WVPP motif in this isoform. In terms of processing, sumoylation with SUMO2/3 by NSMCE2/MMS21 promotes stabilization, possibly by preventing ubiquitination. Sumoylation is required for alternative lengthening of telomeres (ALT) pathway. As to expression, highly expressed in testis and thymus. Lower levels in colon and small intestine. Little or no expression in spleen, prostate, ovary and peripheral blood leukocytes.

The protein localises to the chromosome. The protein resides in the nucleus. It is found in the telomere. Its function is as follows. Structure-specific DNA-binding protein involved in DNA repair by promoting RAD51-mediated homologous recombination. Acts by stimulating D-Loop formation by RAD51: specifically enhances joint molecule formation through its structure-specific DNA interaction and its interaction with RAD51. Binds single-stranded DNA (ssDNA), double-stranded DNA (dsDNA) and secondary DNA structures, such as D-loop structures: has a strong preference for branched-DNA structures that are obligatory intermediates during joint molecule formation. Cooperates with WDR48/UAF1 to stimulate RAD51-mediated homologous recombination: both WDR48/UAF1 and RAD51AP1 have coordinated role in DNA-binding during homologous recombination and DNA repair. WDR48/UAF1 and RAD51AP1 also have a coordinated role in DNA-binding to promote USP1-mediated deubiquitination of FANCD2. Also involved in meiosis by promoting DMC1-mediated homologous meiotic recombination. Key mediator of alternative lengthening of telomeres (ALT) pathway, a homology-directed repair mechanism of telomere elongation that controls proliferation in aggressive cancers, by stimulating homologous recombination. May also bind RNA; additional evidences are however required to confirm RNA-binding in vivo. The chain is RAD51-associated protein 1 from Homo sapiens (Human).